The primary structure comprises 90 residues: Co-chaperonin GroES (90 aa).

Belongs to the GroES chaperonin family. Heptamer of 7 subunits arranged in a ring. Interacts with the chaperonin GroEL.

It localises to the cytoplasm. In terms of biological role, together with the chaperonin GroEL, plays an essential role in assisting protein folding. The GroEL-GroES system forms a nano-cage that allows encapsulation of the non-native substrate proteins and provides a physical environment optimized to promote and accelerate protein folding. GroES binds to the apical surface of the GroEL ring, thereby capping the opening of the GroEL channel. The sequence is that of Co-chaperonin GroES from Fusobacterium nucleatum subsp. polymorphum (Fusobacterium polymorphum).